The sequence spans 246 residues: Uridylate kinase (246 aa).

18 to 21 provides a ligand contact to ATP; it reads KVSG. Gly60 lines the UMP pocket. ATP-binding residues include Gly61 and Arg65. UMP contacts are provided by residues Asp80 and 141-148; that span reads TGNPFFTT. ATP-binding residues include Thr168, Gln169, Tyr174, and Asp177.

The protein belongs to the UMP kinase family. Homohexamer.

Its subcellular location is the cytoplasm. It carries out the reaction UMP + ATP = UDP + ADP. It participates in pyrimidine metabolism; CTP biosynthesis via de novo pathway; UDP from UMP (UMPK route): step 1/1. Its activity is regulated as follows. Inhibited by UTP. Catalyzes the reversible phosphorylation of UMP to UDP. This is Uridylate kinase from Gluconobacter oxydans (strain 621H) (Gluconobacter suboxydans).